A 214-amino-acid chain; its full sequence is MSDETTVGGEAPAEKDDARHAMKMAKKKAAREKIMATKTDEKGLIIVNTGKGKGKSTAGFGMIFRHIAHGMPCAVVQFIKGAMATGERELIEKHFGDVCQFYTLGEGFTWETQDRARDVAMAEKAWEKAKELIRDERNSMVLLDEINIALRYDYIDVAEVVRFLKEEKPHMTHVVLTGRNAKEDLIEVADLVTEMELIKHPFRSGIKAQQGVEF.

50-56 is a binding site for ATP; it reads GKGKGKS.

This sequence belongs to the Cob(I)alamin adenosyltransferase family. Monomer. Mn(2+) is required as a cofactor.

The protein resides in the cytoplasm. It catalyses the reaction 2 cob(II)yrinate a,c diamide + reduced [electron-transfer flavoprotein] + 2 ATP = 2 adenosylcob(III)yrinate a,c-diamide + 2 triphosphate + oxidized [electron-transfer flavoprotein] + 3 H(+). The catalysed reaction is 2 cob(II)alamin + reduced [electron-transfer flavoprotein] + 2 ATP = 2 adenosylcob(III)alamin + 2 triphosphate + oxidized [electron-transfer flavoprotein] + 3 H(+). It participates in cofactor biosynthesis; adenosylcobalamin biosynthesis; adenosylcobalamin from cob(II)yrinate a,c-diamide: step 2/7. Required for both de novo synthesis of the corrin ring for the assimilation of exogenous corrinoids. Participates in the adenosylation of a variety of incomplete and complete corrinoids. This Sinorhizobium sp protein is Corrinoid adenosyltransferase (cobO).